The primary structure comprises 288 residues: Bifunctional protein FolD (288 aa).

NADP(+) contacts are provided by residues 165–167 (GRS), Ser190, and Ile231.

Belongs to the tetrahydrofolate dehydrogenase/cyclohydrolase family. As to quaternary structure, homodimer.

It carries out the reaction (6R)-5,10-methylene-5,6,7,8-tetrahydrofolate + NADP(+) = (6R)-5,10-methenyltetrahydrofolate + NADPH. The enzyme catalyses (6R)-5,10-methenyltetrahydrofolate + H2O = (6R)-10-formyltetrahydrofolate + H(+). The protein operates within one-carbon metabolism; tetrahydrofolate interconversion. Catalyzes the oxidation of 5,10-methylenetetrahydrofolate to 5,10-methenyltetrahydrofolate and then the hydrolysis of 5,10-methenyltetrahydrofolate to 10-formyltetrahydrofolate. The sequence is that of Bifunctional protein FolD from Nitrosospira multiformis (strain ATCC 25196 / NCIMB 11849 / C 71).